Consider the following 190-residue polypeptide: Calcium-binding protein NCS-1 (190 aa).

Glycine 2 carries N-myristoyl glycine lipidation. EF-hand domains lie at 40–58 (SGHL…FFPF), 60–95 (DPSA…TSRG), 96–131 (ELND…IYKM), and 144–179 (TPEK…DPTI). The Ca(2+) site is built by aspartate 73, aspartate 75, asparagine 77, tyrosine 79, glutamate 84, aspartate 109, aspartate 111, asparagine 113, glutamate 120, aspartate 157, asparagine 159, aspartate 161, glutamine 163, and glutamate 168.

The protein belongs to the recoverin family.

The protein localises to the membrane. Negatively regulates sporulation perhaps by controlling Ca(2+)-dependent desensitization of git3. The polypeptide is Calcium-binding protein NCS-1 (ncs1) (Schizosaccharomyces pombe (strain 972 / ATCC 24843) (Fission yeast)).